The following is a 278-amino-acid chain: HTH-type transcriptional activator RhaS (278 aa).

The 99-residue stretch at 174–272 (NLLLAWLEDH…NWSPRDIRQG (99 aa)) folds into the HTH araC/xylS-type domain. 2 consecutive DNA-binding regions (H-T-H motif) follow at residues 191 to 212 (DAVA…KQQT) and 239 to 262 (VTDI…RREF).

Binds DNA as a dimer.

It is found in the cytoplasm. Its function is as follows. Activates expression of the rhaBAD and rhaT operons. In Escherichia coli (strain SMS-3-5 / SECEC), this protein is HTH-type transcriptional activator RhaS.